The sequence spans 495 residues: MFS transporter prlL (495 aa).

Residues 1 to 24 are disordered; it reads MAQSFANEHDPAKRAEERGHVGTI. Residues 7–20 show a composition bias toward basic and acidic residues; sequence NEHDPAKRAEERGH. A run of 11 helical transmembrane segments spans residues 102–122, 130–150, 159–179, 189–209, 224–244, 292–312, 329–349, 356–376, 386–406, 418–438, and 449–469; these read IALMIFFLAYGLFEVPSNVLL, WIAILMFSWGAISMGLAGAHN, FLLGIFEAGLFPGLVYYLTFW, VAFILASATLAGAFGGAIAYA, WLFIIEGAPSCVSALFVLFFL, LWAHYLIYFGISTPFSSLSLF, LMTVPPYAVAYVVQILVSWSA, GLHSAASATVGACGFLASAVL, GCLIVAAAGAFACIPPLLGWL, LAIALNIGLGGAPGQIAGVWI, and PTGHWVNAGLLFFVAVACVAL.

This sequence belongs to the major facilitator superfamily.

The protein localises to the cell membrane. Functionally, efflux pump that might be required for efficient secretion of pyrrolocin or other secondary metabolies produced by the pyrrolocin gene cluster. In Fungal sp. (strain NRRL 50135), this protein is MFS transporter prlL.